The sequence spans 306 residues: Acetyl-coenzyme A carboxylase carboxyl transferase subunit beta (306 aa).

In terms of domain architecture, CoA carboxyltransferase N-terminal spans Leu-25–Thr-294.

Belongs to the AccD/PCCB family. Acetyl-CoA carboxylase is a heterohexamer composed of biotin carboxyl carrier protein (AccB), biotin carboxylase (AccC) and two subunits each of ACCase subunit alpha (AccA) and ACCase subunit beta (AccD).

The protein localises to the cytoplasm. The enzyme catalyses N(6)-carboxybiotinyl-L-lysyl-[protein] + acetyl-CoA = N(6)-biotinyl-L-lysyl-[protein] + malonyl-CoA. It functions in the pathway lipid metabolism; malonyl-CoA biosynthesis; malonyl-CoA from acetyl-CoA: step 1/1. Its function is as follows. Component of the acetyl coenzyme A carboxylase (ACC) complex. Biotin carboxylase (BC) catalyzes the carboxylation of biotin on its carrier protein (BCCP) and then the CO(2) group is transferred by the transcarboxylase to acetyl-CoA to form malonyl-CoA. The sequence is that of Acetyl-coenzyme A carboxylase carboxyl transferase subunit beta from Allorhizobium ampelinum (strain ATCC BAA-846 / DSM 112012 / S4) (Agrobacterium vitis (strain S4)).